The chain runs to 151 residues: D-aminoacyl-tRNA deacylase (151 aa).

A Gly-cisPro motif, important for rejection of L-amino acids motif is present at residues 136 to 137 (GP).

The protein belongs to the DTD family. In terms of assembly, homodimer.

The protein resides in the cytoplasm. It carries out the reaction glycyl-tRNA(Ala) + H2O = tRNA(Ala) + glycine + H(+). The catalysed reaction is a D-aminoacyl-tRNA + H2O = a tRNA + a D-alpha-amino acid + H(+). An aminoacyl-tRNA editing enzyme that deacylates mischarged D-aminoacyl-tRNAs. Also deacylates mischarged glycyl-tRNA(Ala), protecting cells against glycine mischarging by AlaRS. Acts via tRNA-based rather than protein-based catalysis; rejects L-amino acids rather than detecting D-amino acids in the active site. By recycling D-aminoacyl-tRNA to D-amino acids and free tRNA molecules, this enzyme counteracts the toxicity associated with the formation of D-aminoacyl-tRNA entities in vivo and helps enforce protein L-homochirality. The polypeptide is D-aminoacyl-tRNA deacylase (Lactococcus lactis subsp. cremoris (strain MG1363)).